The sequence spans 122 residues: Basic phospholipase A2 Cdr-12 (122 aa).

Intrachain disulfides connect C26–C115, C28–C44, C43–C95, C49–C122, C50–C88, C57–C81, and C75–C86. Ca(2+)-binding residues include Y27, G29, and G31. H47 is a catalytic residue. D48 provides a ligand contact to Ca(2+). Residue D89 is part of the active site.

The cofactor is Ca(2+). Expressed by the venom gland.

Its subcellular location is the secreted. It carries out the reaction a 1,2-diacyl-sn-glycero-3-phosphocholine + H2O = a 1-acyl-sn-glycero-3-phosphocholine + a fatty acid + H(+). Snake venom phospholipase A2 (PLA2) that induces myonecrosis and edema upon intramuscular injections in mice. In vitro, causes a potent blockade of neuromuscular transmission in young chicken biventer cervicis preparation and produces cytotoxicity in murine C2C12 skeletal muscle myotubes and lack cytolytic activity upon myoblasts in vitro. PLA2 catalyzes the calcium-dependent hydrolysis of the 2-acyl groups in 3-sn-phosphoglycerides. This chain is Basic phospholipase A2 Cdr-12, found in Crotalus durissus ruruima (South American rattlesnake).